Reading from the N-terminus, the 662-residue chain is MDPKERIKELREKINYHNYRYYVLDQPEISDYEYDMLMRELIELEEKYPELKTPDSPSQRVGGEPLKEFEPFTHVVPMLSLANAFSEGELRDFDRRVREAVGDVEYVVELKIDGLSVELIYEKGIFTVGSTRGDGIVGENVTQNLKTIKSIPLRLKDDVSLVVRGEVFMPRASFEKLNEEREKLGESLFANPRNAAAGSLRQLDPKVTAKRDLDIFIFNLQKIEGRKFKTHIETLEFLNEQGFKIIPIHKKCSNIDEVIKEIEEIRNLRDKLPYDIDGAVVKVNDLEKREILGQTAKDPRWAIAFKYPAERKKTKVLDIIVQVGRTGALTPTAILEPVAISGSVVSRATLHNEDYIKEKDIRIGDTVIVQKAGEIIPEVVEVVKEERTGQEREFVMPDRCPECGALAVRLLGEAIRRCTGLNCPAQLLRGIIHFASKDAMDIEGLGPAIINQLLSKGLIHNIADLYYLKYEDLIQLERMGDKSVKNLLNAIEESKTRDLDRLLFGLGINLIGSKAAQVIAEHFKTMDNIMKAKFEDFTQLPDIGPKMARSIVSFFAEKQNVEIIEKLKNAGVNMKKIPKEKVNNIFEGKTFVLTGALGNYTREEATRIIEERGGKVTNSVSKKTDYVLVGKDPGSKLKKAQELGIKIIDEKQFEEMLKGENI.

NAD(+) is bound by residues 31-35, 80-81, and E109; these read DYEYD and SL. The active-site N6-AMP-lysine intermediate is K111. 4 residues coordinate NAD(+): R132, E166, K282, and K306. Zn(2+)-binding residues include C400, C403, C418, and C423. Positions 581-662 constitute a BRCT domain; sequence KVNNIFEGKT…FEEMLKGENI (82 aa).

It belongs to the NAD-dependent DNA ligase family. LigA subfamily. Requires Mg(2+) as cofactor. It depends on Mn(2+) as a cofactor.

The catalysed reaction is NAD(+) + (deoxyribonucleotide)n-3'-hydroxyl + 5'-phospho-(deoxyribonucleotide)m = (deoxyribonucleotide)n+m + AMP + beta-nicotinamide D-nucleotide.. Functionally, DNA ligase that catalyzes the formation of phosphodiester linkages between 5'-phosphoryl and 3'-hydroxyl groups in double-stranded DNA using NAD as a coenzyme and as the energy source for the reaction. It is essential for DNA replication and repair of damaged DNA. In Thermoanaerobacter pseudethanolicus (strain ATCC 33223 / 39E) (Clostridium thermohydrosulfuricum), this protein is DNA ligase.